Reading from the N-terminus, the 89-residue chain is Large ribosomal subunit protein bL27 (89 aa).

Positions 1-22 are disordered; that stretch reads MAHKKAGGSSRNGRDSESKRLG.

Belongs to the bacterial ribosomal protein bL27 family.

This Brucella abortus (strain S19) protein is Large ribosomal subunit protein bL27.